Consider the following 392-residue polypeptide: Probable protein phosphatase 2C 78 (392 aa).

The PPM-type phosphatase domain maps to 39 to 342 (ASGEYSIAVA…DDITVVVVYL (304 aa)). The Mn(2+) site is built by aspartate 73, glycine 74, aspartate 274, and aspartate 333.

Belongs to the PP2C family. Mg(2+) is required as a cofactor. Mn(2+) serves as cofactor.

The catalysed reaction is O-phospho-L-seryl-[protein] + H2O = L-seryl-[protein] + phosphate. The enzyme catalyses O-phospho-L-threonyl-[protein] + H2O = L-threonyl-[protein] + phosphate. The polypeptide is Probable protein phosphatase 2C 78 (Oryza sativa subsp. japonica (Rice)).